The sequence spans 366 residues: MITLQRTPLFDVYAKYGGKTIDFGGWELPVQFSSIKEEHEAVRTAAGLFDVSHMGEVEVKGVDSLAFLQRVVTNDVSTLKVGGAQYTAMCYENGGTVDDLLIYKRGEEDYLLVINASNIEKDYEWLASHVIGDATVVNVSSEVAQLAIQGPKAEGILQKVVSEDLKEIKFFKFKKDILVDGIPALVSRTGYTGEDGFEIYCKSEDAAKLWEKLLEVGAEEGLKACGLGARDTLRFEATLPLYGQELSKDITPIEAGIGFAVKTNKEADFFGKATLKEQKENGAPRKLVGIEVIERGIPRTHYPVFIGEEKIGEVTSGTQSPTLKKSIGLALIDVKYAAVDTEVEIEIRNKRVKAVVVPTPFYKRSK.

The protein belongs to the GcvT family. In terms of assembly, the glycine cleavage system is composed of four proteins: P, T, L and H.

The catalysed reaction is N(6)-[(R)-S(8)-aminomethyldihydrolipoyl]-L-lysyl-[protein] + (6S)-5,6,7,8-tetrahydrofolate = N(6)-[(R)-dihydrolipoyl]-L-lysyl-[protein] + (6R)-5,10-methylene-5,6,7,8-tetrahydrofolate + NH4(+). In terms of biological role, the glycine cleavage system catalyzes the degradation of glycine. The protein is Aminomethyltransferase of Bacillus cereus (strain B4264).